Here is a 395-residue protein sequence, read N- to C-terminus: Acetate kinase (395 aa).

Residue Asn-8 participates in Mg(2+) binding. Lys-15 lines the ATP pocket. Arg-89 serves as a coordination point for substrate. The Proton donor/acceptor role is filled by Asp-146. ATP contacts are provided by residues 206–210 (HLGNG), 281–283 (DLR), and 329–333 (GIGEN). Glu-382 provides a ligand contact to Mg(2+).

It belongs to the acetokinase family. In terms of assembly, homodimer. It depends on Mg(2+) as a cofactor. Requires Mn(2+) as cofactor.

It is found in the cytoplasm. The catalysed reaction is acetate + ATP = acetyl phosphate + ADP. It participates in metabolic intermediate biosynthesis; acetyl-CoA biosynthesis; acetyl-CoA from acetate: step 1/2. Catalyzes the formation of acetyl phosphate from acetate and ATP. Can also catalyze the reverse reaction. The polypeptide is Acetate kinase (Bacillus velezensis (strain DSM 23117 / BGSC 10A6 / LMG 26770 / FZB42) (Bacillus amyloliquefaciens subsp. plantarum)).